A 185-amino-acid chain; its full sequence is Transcriptional repressor NrdR (185 aa).

Residues 1–24 (MRCPFCGGPDTQVKDSRPSEDSSA) are disordered. The segment at 3–34 (CPFCGGPDTQVKDSRPSEDSSAIRRRRVCPDC) is a zinc-finger region. Positions 12–24 (QVKDSRPSEDSSA) are enriched in basic and acidic residues. In terms of domain architecture, ATP-cone spans 49 to 139 (LVVLKRSGKR…VYKNFREAQD (91 aa)). A disordered region spans residues 149–185 (ERLEGEGDLPEDGEAAPAPPDEVVAAPRRGRPARKRA). A compositionally biased stretch (basic residues) spans 176–185 (RRGRPARKRA).

The protein belongs to the NrdR family. It depends on Zn(2+) as a cofactor.

Functionally, negatively regulates transcription of bacterial ribonucleotide reductase nrd genes and operons by binding to NrdR-boxes. In Methylorubrum extorquens (strain PA1) (Methylobacterium extorquens), this protein is Transcriptional repressor NrdR.